The following is a 273-amino-acid chain: Undecaprenyl-diphosphatase (273 aa).

Transmembrane regions (helical) follow at residues 6–26 (SLLIAAILGVVEGLTEFLPVS), 45–65 (AKTFEVVIQLGSILAVVVMFW), 90–110 (LTLIHILLGMIPAVVLGLLFH), 116–136 (LFNPINVMYALVVGGLLLIAA), 190–210 (YAASEFSFLLAVPMMMGATAL), 222–242 (GDISMFAVGFITAFVVALIAI), and 252–272 (ISFIPFAIYRFIVAAAVYVVF).

This sequence belongs to the UppP family.

The protein resides in the cell inner membrane. It catalyses the reaction di-trans,octa-cis-undecaprenyl diphosphate + H2O = di-trans,octa-cis-undecaprenyl phosphate + phosphate + H(+). Functionally, catalyzes the dephosphorylation of undecaprenyl diphosphate (UPP). Confers resistance to bacitracin. This is Undecaprenyl-diphosphatase from Shigella sonnei (strain Ss046).